Reading from the N-terminus, the 138-residue chain is Thyrotropin subunit beta (138 aa).

A signal peptide spans 1–20 (MSAAVLLSVLFALACGQAAS). Disulfide bonds link Cys-22/Cys-72, Cys-36/Cys-87, Cys-39/Cys-125, Cys-47/Cys-103, Cys-51/Cys-105, and Cys-108/Cys-115. A glycan (N-linked (GlcNAc...) asparagine) is linked at Asn-43. Residues 133–138 (LGGFSV) constitute a propeptide that is removed on maturation.

Belongs to the glycoprotein hormones subunit beta family. In terms of assembly, heterodimer of a common alpha chain and a unique beta chain which confers biological specificity to thyrotropin, lutropin, follitropin and gonadotropin.

It is found in the secreted. Functionally, indispensable for the control of thyroid structure and metabolism. This is Thyrotropin subunit beta (Tshb) from Mus musculus (Mouse).